Reading from the N-terminus, the 520-residue chain is 4-hydroxyphenylacetate 3-monooxygenase oxygenase component (520 aa).

FAD-binding positions include histidine 155–isoleucine 157 and threonine 196.

The protein belongs to the FADH(2)-utilizing monooxygenase family. Homodimer. HPA 3-hydroxylase consists of a reductase component HpaC and an oxygenase component HpaB. Some form of interactions between the reductase and the oxygenase facilitate the transfer of FADH(-) to the oxygenase in P.aeruginosa, although interactions are not required in other species.

The enzyme catalyses 4-hydroxyphenylacetate + FADH2 + O2 = 3,4-dihydroxyphenylacetate + FAD + H2O + H(+). It participates in aromatic compound metabolism; 4-hydroxyphenylacetate degradation; pyruvate and succinate semialdehyde from 4-hydroxyphenylacetate: step 1/7. Oxygenase component of the 4-hydroxyphenylacetate (HPA) 3-hydroxylase. Catalyzes the hydroxylation of 4-hydroxyphenylacetate to form 3,4-dihydroxyphenylacetate, using FADH(-) provided by the reductase component HpaC to activate oxygen. To a lesser extent, can also use reduced FMN. In vitro, has hydroxylation activity toward tyrosol and various cinnamic acid derivatives, catalyzing the hydroxylation of p-coumaric acid, caffeic acid, ferulic acid, and coniferaldehyde. This is 4-hydroxyphenylacetate 3-monooxygenase oxygenase component from Pseudomonas aeruginosa (strain ATCC 15692 / DSM 22644 / CIP 104116 / JCM 14847 / LMG 12228 / 1C / PRS 101 / PAO1).